Reading from the N-terminus, the 117-residue chain is UPF0342 protein OB1136 (117 aa).

It belongs to the UPF0342 family.

The chain is UPF0342 protein OB1136 from Oceanobacillus iheyensis (strain DSM 14371 / CIP 107618 / JCM 11309 / KCTC 3954 / HTE831).